The sequence spans 315 residues: tRNA dimethylallyltransferase (315 aa).

11-18 (GPTASGKS) serves as a coordination point for ATP. Residue 13 to 18 (TASGKS) coordinates substrate. Interaction with substrate tRNA regions lie at residues 36 to 39 (DSMQ) and 160 to 164 (QRLIR).

This sequence belongs to the IPP transferase family. Monomer. Mg(2+) is required as a cofactor.

It catalyses the reaction adenosine(37) in tRNA + dimethylallyl diphosphate = N(6)-dimethylallyladenosine(37) in tRNA + diphosphate. Its function is as follows. Catalyzes the transfer of a dimethylallyl group onto the adenine at position 37 in tRNAs that read codons beginning with uridine, leading to the formation of N6-(dimethylallyl)adenosine (i(6)A). The protein is tRNA dimethylallyltransferase of Rickettsia bellii (strain RML369-C).